We begin with the raw amino-acid sequence, 315 residues long: 4-diphosphocytidyl-2-C-methyl-D-erythritol kinase (315 aa).

Residue lysine 8 is part of the active site. 93–103 (PVAAGLAGGSS) contacts ATP. The active site involves aspartate 135.

It belongs to the GHMP kinase family. IspE subfamily.

The enzyme catalyses 4-CDP-2-C-methyl-D-erythritol + ATP = 4-CDP-2-C-methyl-D-erythritol 2-phosphate + ADP + H(+). It functions in the pathway isoprenoid biosynthesis; isopentenyl diphosphate biosynthesis via DXP pathway; isopentenyl diphosphate from 1-deoxy-D-xylulose 5-phosphate: step 3/6. Catalyzes the phosphorylation of the position 2 hydroxy group of 4-diphosphocytidyl-2C-methyl-D-erythritol. This chain is 4-diphosphocytidyl-2-C-methyl-D-erythritol kinase, found in Heliobacterium modesticaldum (strain ATCC 51547 / Ice1).